A 218-amino-acid chain; its full sequence is Octanoyltransferase (218 aa).

The BPL/LPL catalytic domain occupies 32 to 218; sequence GDAPEAVWLL…LRTFSRSFPD (187 aa). Substrate contacts are provided by residues 71-78, 151-153, and 164-166; these read RGGQYTYH, AIG, and GLS. Residue Cys-182 is the Acyl-thioester intermediate of the active site.

Belongs to the LipB family.

The protein resides in the cytoplasm. The enzyme catalyses octanoyl-[ACP] + L-lysyl-[protein] = N(6)-octanoyl-L-lysyl-[protein] + holo-[ACP] + H(+). The protein operates within protein modification; protein lipoylation via endogenous pathway; protein N(6)-(lipoyl)lysine from octanoyl-[acyl-carrier-protein]: step 1/2. Its function is as follows. Catalyzes the transfer of endogenously produced octanoic acid from octanoyl-acyl-carrier-protein onto the lipoyl domains of lipoate-dependent enzymes. Lipoyl-ACP can also act as a substrate although octanoyl-ACP is likely to be the physiological substrate. This chain is Octanoyltransferase, found in Cereibacter sphaeroides (strain ATCC 17025 / ATH 2.4.3) (Rhodobacter sphaeroides).